Here is a 708-residue protein sequence, read N- to C-terminus: ATP-dependent DNA helicase Hel308 (708 aa).

ATP contacts are provided by residues Q28 and 46–53 (TATASGKS). A Helicase ATP-binding domain is found at 33-198 (RAGIFDGRSV…WLGARLVESS (166 aa)). A DEAH box motif is present at residues 143 to 146 (DEIH). Residues 231-429 (EVALAVDAVA…EPNLRAHVLG (199 aa)) form the Helicase C-terminal domain.

This sequence belongs to the helicase family. Hel308 subfamily. Monomer.

It carries out the reaction Couples ATP hydrolysis with the unwinding of duplex DNA by translocating in the 3'-5' direction.. The catalysed reaction is ATP + H2O = ADP + phosphate + H(+). In terms of biological role, DNA-dependent ATPase and 3'-5' DNA helicase that may be involved in repair of stalled replication forks. The polypeptide is ATP-dependent DNA helicase Hel308 (Pyrobaculum calidifontis (strain DSM 21063 / JCM 11548 / VA1)).